The primary structure comprises 191 residues: Crossover junction endodeoxyribonuclease RuvC (191 aa).

Residues D7, E67, and D140 contribute to the active site. D7, E67, and D140 together coordinate Mg(2+).

Belongs to the RuvC family. In terms of assembly, homodimer which binds Holliday junction (HJ) DNA. The HJ becomes 2-fold symmetrical on binding to RuvC with unstacked arms; it has a different conformation from HJ DNA in complex with RuvA. In the full resolvosome a probable DNA-RuvA(4)-RuvB(12)-RuvC(2) complex forms which resolves the HJ. Requires Mg(2+) as cofactor.

It localises to the cytoplasm. It catalyses the reaction Endonucleolytic cleavage at a junction such as a reciprocal single-stranded crossover between two homologous DNA duplexes (Holliday junction).. In terms of biological role, the RuvA-RuvB-RuvC complex processes Holliday junction (HJ) DNA during genetic recombination and DNA repair. Endonuclease that resolves HJ intermediates. Cleaves cruciform DNA by making single-stranded nicks across the HJ at symmetrical positions within the homologous arms, yielding a 5'-phosphate and a 3'-hydroxyl group; requires a central core of homology in the junction. The consensus cleavage sequence is 5'-(A/T)TT(C/G)-3'. Cleavage occurs on the 3'-side of the TT dinucleotide at the point of strand exchange. HJ branch migration catalyzed by RuvA-RuvB allows RuvC to scan DNA until it finds its consensus sequence, where it cleaves and resolves the cruciform DNA. The sequence is that of Crossover junction endodeoxyribonuclease RuvC from Pelodictyon phaeoclathratiforme (strain DSM 5477 / BU-1).